The chain runs to 383 residues: Hydroxymethylglutaryl-CoA synthase (383 aa).

D29 is a binding site for (3S)-3-hydroxy-3-methylglutaryl-CoA. E79 serves as the catalytic Proton donor/acceptor. (3S)-3-hydroxy-3-methylglutaryl-CoA-binding residues include C111, T152, S201, H233, K242, N275, and S308. Catalysis depends on C111, which acts as the Acyl-thioester intermediate. H233 functions as the Proton donor/acceptor in the catalytic mechanism.

The protein belongs to the thiolase-like superfamily. HMG-CoA synthase family. Homodimer.

The catalysed reaction is acetoacetyl-CoA + acetyl-CoA + H2O = (3S)-3-hydroxy-3-methylglutaryl-CoA + CoA + H(+). It functions in the pathway metabolic intermediate biosynthesis; (R)-mevalonate biosynthesis; (R)-mevalonate from acetyl-CoA: step 2/3. Is sensitive to feedback substrate inhibition by acetoacetyl-CoA. Is inactivated by hymeglusin, which also blocks the growth of E.faecalis, indicating the critical role that the mevalonate pathway plays in isoprenoid biosynthesis. In terms of biological role, catalyzes the condensation of acetyl-CoA with acetoacetyl-CoA to form 3-hydroxy-3-methylglutaryl-CoA (HMG-CoA). Functions in the mevalonate (MVA) pathway leading to isopentenyl diphosphate (IPP), a key precursor for the biosynthesis of isoprenoid compounds. The polypeptide is Hydroxymethylglutaryl-CoA synthase (mvaS) (Enterococcus faecalis (Streptococcus faecalis)).